We begin with the raw amino-acid sequence, 82 residues long: MSGHTSVSFLLLSIVALGMVATVICSCDSEFSSEFCERPEESCSCSTHTCCHWARRDQCMKPQRCISAQKGNGRRRLIHMQK.

The N-terminal stretch at 1 to 25 (MSGHTSVSFLLLSIVALGMVATVIC) is a signal peptide. A 4-carboxyglutamate mark is found at Glu30, Glu34, Glu37, Glu40, and Glu41. Asn72 carries the post-translational modification Asparagine amide. Positions 77 to 82 (LIHMQK) are excised as a propeptide.

Post-translationally, contains 4 disulfide bonds. As to expression, expressed by the venom duct.

The protein resides in the secreted. The protein is Conotoxin Gla-TxX of Conus textile (Cloth-of-gold cone).